The chain runs to 101 residues: Protein snet-1 (101 aa).

Positions 1 to 20 (MARFTPLLMILLALVPLYYS) are cleaved as a signal peptide.

In terms of processing, may be degraded by the nep-2 peptidase. Expressed in coelomocytes, the ASK sensory neurons and interneurons AIB, AIM and PVQ.

It localises to the secreted. The protein localises to the perikaryon. Functionally, negatively regulates chemotaxis and olfactory plasticity which is the change from positive chemotaxis to dispersal after prolonged exposure to an odorant. May be down-regulated in response to pheromone exposure, resulting in promotion of olfactory plasticity. The polypeptide is Protein snet-1 (Caenorhabditis elegans).